The following is a 144-amino-acid chain: Deoxyuridine 5'-triphosphate nucleotidohydrolase (144 aa).

Substrate-binding positions include 63-65 (RSG), Asn76, and 80-82 (TID).

It belongs to the dUTPase family. Mg(2+) is required as a cofactor.

The enzyme catalyses dUTP + H2O = dUMP + diphosphate + H(+). It functions in the pathway pyrimidine metabolism; dUMP biosynthesis; dUMP from dCTP (dUTP route): step 2/2. This enzyme is involved in nucleotide metabolism: it produces dUMP, the immediate precursor of thymidine nucleotides and it decreases the intracellular concentration of dUTP so that uracil cannot be incorporated into DNA. This is Deoxyuridine 5'-triphosphate nucleotidohydrolase from Porphyromonas gingivalis (strain ATCC 33277 / DSM 20709 / CIP 103683 / JCM 12257 / NCTC 11834 / 2561).